The primary structure comprises 205 residues: MKAFAGSFQPWIPQCRSPCICEVAASKDNGVLERPCSTLSVIVNIAVKKSYINPSPPAKMKFTIPATLGLMVSLSSAAAISGTVSLSYDPKYDNAGLSLTQVTCSDGTNGLITKGFTTAGSLPNFPNIGGSFAVEGYNSANCGKCFKVTWPVLNKSIFVTSIDKADGFNVAKAAMDTLTNNQAGQLGRIDVTFEDALPTDCGFKA.

It belongs to the cerato-platanin family.

The protein localises to the secreted. The sequence is that of Allergen Asp f 15 homolog from Arthroderma benhamiae (strain ATCC MYA-4681 / CBS 112371) (Trichophyton mentagrophytes).